Reading from the N-terminus, the 428-residue chain is Adenylosuccinate synthetase (428 aa).

GTP is bound by residues 12–18 and 40–42; these read GDEGKGK and GHT. The Proton acceptor role is filled by Asp13. Asp13 and Gly40 together coordinate Mg(2+). Residues 13 to 16, 38 to 41, Thr128, Arg142, Gln223, Thr238, and Arg302 contribute to the IMP site; these read DEGK and NAGH. His41 (proton donor) is an active-site residue. 298–304 contacts substrate; the sequence is TTTGRPR. GTP contacts are provided by residues Arg304, 330-332, and 412-414; these read SID and SVG.

This sequence belongs to the adenylosuccinate synthetase family. In terms of assembly, homodimer. Requires Mg(2+) as cofactor.

Its subcellular location is the cytoplasm. The catalysed reaction is IMP + L-aspartate + GTP = N(6)-(1,2-dicarboxyethyl)-AMP + GDP + phosphate + 2 H(+). It participates in purine metabolism; AMP biosynthesis via de novo pathway; AMP from IMP: step 1/2. Functionally, plays an important role in the de novo pathway of purine nucleotide biosynthesis. Catalyzes the first committed step in the biosynthesis of AMP from IMP. The chain is Adenylosuccinate synthetase from Streptococcus pneumoniae serotype 2 (strain D39 / NCTC 7466).